The chain runs to 49 residues: MWDMIKNFFLFSSGVLQATTLLLVILIFMYVRKTKKKNKESSGFMDDKH.

A helical transmembrane segment spans residues 8–28 (FFLFSSGVLQATTLLLVILIF).

The protein resides in the cell membrane. This is an uncharacterized protein from Bacillus subtilis (strain 168).